The following is a 241-amino-acid chain: MSYNGKDLGELQLKCHQSMLQAGAVFENCTFVNGDVLLEIPSFFIESLQFHYLINQSEKISLKLIFWNELVYLLGLNDTSKASATTSFQQGQIETKPDLTLFINELLTTKKEHKKLDNDNRESEIPFSDTRFHDEFDRESRACLHRSEFPKNPHAFLAQDLPHGLPHRRAALPCEALGFHPNVGDYFDWYPHRPNHFGGKFDGHSRGRGAGRGGFCGRHGRGGFGKRSGLHGCREEFWMQV.

It is found in the cytoplasm. The protein localises to the nucleus. This is an uncharacterized protein from Schizosaccharomyces pombe (strain 972 / ATCC 24843) (Fission yeast).